Reading from the N-terminus, the 151-residue chain is MNSSALPHVTIFTDGACSGNPGPGGWGAILRFGEIEKELKGGEPHTTNNRMELLAAISALEALKKAASVDLTTDSQYVRQGITSWIHNWKRNGWRTADKKPVKNADLWQRLDTALQPHQVRWHWIKGHAGHDENERADQLAREGVALARLK.

An RNase H type-1 domain is found at alanine 5–alanine 146. Aspartate 14, glutamate 52, aspartate 74, and aspartate 138 together coordinate Mg(2+).

Belongs to the RNase H family. As to quaternary structure, monomer. It depends on Mg(2+) as a cofactor.

Its subcellular location is the cytoplasm. It catalyses the reaction Endonucleolytic cleavage to 5'-phosphomonoester.. Functionally, endonuclease that specifically degrades the RNA of RNA-DNA hybrids. The chain is Ribonuclease H from Nitrobacter hamburgensis (strain DSM 10229 / NCIMB 13809 / X14).